The primary structure comprises 558 residues: MTKYVFVTGGVVSSLGKGIAAASLAAILESRGLKVTLLKLDPYINVDPGTMSPLQHGEVFVTEDGAETDLDLGHYERFVSAKMRKSNNFTTGQIYESVISKERRGEYLGKTVQVIPHITSEIQAFVERGAKAIHDGKADVAICEIGGTVGDIESLPFLEAARQMSLRLPAHDCAFVHLTLVPYINSAGELKTKPTQHSVQKLREIGIMPTVLLCRADRPIPEDGRAKISLFSNVREEAVISVWDVDTIYKIPEMLHAQGMDDLICRELDLKAQPADLSVWAKLVYEMANPQHEVTIGMVGKYVELTESYKSLIEALRHAGIHTHTRVNINYIDSEDIEKEGVDCLQNLDAILVPGGFGKRGTEGKIAAIRYARENNVPYLGICLGMQLAVIEFARHVANLTKANSTEFDPQSDQPVVALITEWLDREGRVEKRSNDSDLGSTMRLGSQRCPVKAGTLAHRIYGAEVNERHRHRYEVNNTYVPQLERSGLIISARTPNEELPEMMELPSSMHPWFFGVQFHPEFTSTPRDGHPLFSAFISAALEHQKKLLKSKLHKGKT.

Residues 1 to 270 (MTKYVFVTGG…DDLICRELDL (270 aa)) are amidoligase domain. Ser13 provides a ligand contact to CTP. Ser13 provides a ligand contact to UTP. Residues 14–19 (SLGKGI) and Asp71 each bind ATP. Residues Asp71 and Glu144 each contribute to the Mg(2+) site. CTP-binding positions include 151–153 (DIE), 191–196 (KTKPTQ), and Lys227. Residues 191–196 (KTKPTQ) and Lys227 each bind UTP. Residues 295–547 (TIGMVGKYVE…ISAALEHQKK (253 aa)) enclose the Glutamine amidotransferase type-1 domain. Gly356 serves as a coordination point for L-glutamine. Cys383 serves as the catalytic Nucleophile; for glutamine hydrolysis. L-glutamine contacts are provided by residues 384–387 (LGMQ), Glu407, and Arg473. Active-site residues include His520 and Glu522.

The protein belongs to the CTP synthase family. Homotetramer.

It catalyses the reaction UTP + L-glutamine + ATP + H2O = CTP + L-glutamate + ADP + phosphate + 2 H(+). It carries out the reaction L-glutamine + H2O = L-glutamate + NH4(+). The enzyme catalyses UTP + NH4(+) + ATP = CTP + ADP + phosphate + 2 H(+). Its pathway is pyrimidine metabolism; CTP biosynthesis via de novo pathway; CTP from UDP: step 2/2. Allosterically activated by GTP, when glutamine is the substrate; GTP has no effect on the reaction when ammonia is the substrate. The allosteric effector GTP functions by stabilizing the protein conformation that binds the tetrahedral intermediate(s) formed during glutamine hydrolysis. Inhibited by the product CTP, via allosteric rather than competitive inhibition. Its function is as follows. Catalyzes the ATP-dependent amination of UTP to CTP with either L-glutamine or ammonia as the source of nitrogen. Regulates intracellular CTP levels through interactions with the four ribonucleotide triphosphates. This chain is CTP synthase, found in Polynucleobacter necessarius subsp. necessarius (strain STIR1).